The chain runs to 571 residues: uncharacterized protein (571 aa).

Transmembrane regions (helical) follow at residues 5 to 27 (VILNVLKNPFIALFLTLSLGYLV), 34 to 56 (TFVLGGISGSLIIGVIIGQLNIT), 61 to 79 (IGSLFFALFIYAGGYQGGA), 92 to 114 (LLASSTITCVLGLLCVLVFAWIF), 161 to 183 (TVGYAVCYIFGSFGPIILLATIF), 391 to 408 (FIFFGLGMVLGYIFGLIS), 412 to 434 (FGISITLGAGVDCLLSGLIFGWI), 455 to 474 (LGLAIFVASVGITAGPQAIT), 484 to 506 (FFLGIGVTIIPQVISFYISYYLL), 513 to 532 (VLLATIAGGRSVNPGFAALL), and 547 to 569 (SYALANIWLTLWGPVIVALVTII).

Belongs to the AAE transporter (TC 2.A.81) family.

The protein resides in the cell membrane. This is an uncharacterized protein from Francisella tularensis subsp. tularensis (strain SCHU S4 / Schu 4).